A 1178-amino-acid chain; its full sequence is DNA-directed RNA polymerase subunit beta (1178 aa).

Residues 1–37 (MLEGCILPDFGQSKTDVSPSQSRPQSSPNNSVPGAPN) form a disordered region. Low complexity predominate over residues 17 to 33 (VSPSQSRPQSSPNNSVP).

Belongs to the RNA polymerase beta chain family. In terms of assembly, the RNAP catalytic core consists of 2 alpha, 1 beta, 1 beta' and 1 omega subunit. When a sigma factor is associated with the core the holoenzyme is formed, which can initiate transcription.

The enzyme catalyses RNA(n) + a ribonucleoside 5'-triphosphate = RNA(n+1) + diphosphate. DNA-dependent RNA polymerase catalyzes the transcription of DNA into RNA using the four ribonucleoside triphosphates as substrates. This Mycobacterium leprae (strain Br4923) protein is DNA-directed RNA polymerase subunit beta.